The sequence spans 31 residues: leu operon leader peptide (31 aa).

Its function is as follows. Involved in control of the biosynthesis of leucine. The chain is leu operon leader peptide (leuL) from Buchnera aphidicola subsp. Rhopalosiphum padi.